Here is a 192-residue protein sequence, read N- to C-terminus: Protein hunchback (192 aa).

3 disordered regions span residues 16–59 (SHHH…SNTN), 88–108 (AAMT…WPGL), and 151–192 (ALTP…KYMA). The segment covering 17–31 (HHHHHHHAHHSRRQH) has biased composition (basic residues). The segment covering 92-103 (PSPSNNDQNSPL) has biased composition (polar residues). The segment covering 173-192 (EPEKEHDLMSNSSEDMKYMA) has biased composition (basic and acidic residues).

This sequence belongs to the hunchback C2H2-type zinc-finger protein family.

The protein localises to the nucleus. In terms of biological role, gap class segmentation protein that controls development of head structures. The protein is Protein hunchback (hb) of Drosophila adiastola (Fruit fly).